Reading from the N-terminus, the 166-residue chain is Small ribosomal subunit protein uS5 (166 aa).

An S5 DRBM domain is found at 12-75 (YIEKLVQVNR…EAARRNMIQV (64 aa)).

This sequence belongs to the universal ribosomal protein uS5 family. In terms of assembly, part of the 30S ribosomal subunit. Contacts proteins S4 and S8.

In terms of biological role, with S4 and S12 plays an important role in translational accuracy. Functionally, located at the back of the 30S subunit body where it stabilizes the conformation of the head with respect to the body. This Pseudomonas savastanoi pv. phaseolicola (strain 1448A / Race 6) (Pseudomonas syringae pv. phaseolicola (strain 1448A / Race 6)) protein is Small ribosomal subunit protein uS5.